An 830-amino-acid chain; its full sequence is WD repeat-containing protein 75 (830 aa).

WD repeat units follow at residues 4-42, 46-85, 89-130, 144-183, 192-230, 236-275, 278-317, 323-361, and 375-422; these read EGVR…KVYS, EECV…KLWD, GILI…QLVS, RQLT…YFFK, LPST…RLWR, QKYT…VEWR, SEKN…TVIH, SAVI…QFYS, and QQEY…KLWN. Lys-426 participates in a covalent cross-link: Glycyl lysine isopeptide (Lys-Gly) (interchain with G-Cter in SUMO2). 4 WD repeats span residues 429–473, 486–524, 528–568, and 573–610; these read GFVL…KVWI, AWTC…TIWD, WELK…CCWN, and SIQW…FVFK. Residues Ser-663 and Ser-671 each carry the phosphoserine modification. Lys-675 participates in a covalent cross-link: Glycyl lysine isopeptide (Lys-Gly) (interchain with G-Cter in SUMO2). Residues 761-807 are disordered; it reads KSAEEVPDDVDMEGNKESDDSDEEYDLTEKDKETNNNTDLGEDAIHQ. Phosphoserine is present on residues Ser-778 and Ser-781. Tyr-785 carries the phosphotyrosine modification. At Ser-811 the chain carries Phosphoserine.

Component of the proposed t-UTP subcomplex of the ribosomal small subunit (SSU) processome. SSU processome is composed of more than 70 proteins and the RNA chaperone small nucleolar RNA (snoRNA) U3.

It is found in the nucleus. Its subcellular location is the nucleolus. Functionally, ribosome biogenesis factor. Part of the small subunit (SSU) processome, first precursor of the small eukaryotic ribosomal subunit. During the assembly of the SSU processome in the nucleolus, many ribosome biogenesis factors, an RNA chaperone and ribosomal proteins associate with the nascent pre-rRNA and work in concert to generate RNA folding, modifications, rearrangements and cleavage as well as targeted degradation of pre-ribosomal RNA by the RNA exosome. Involved in nucleolar processing of pre-18S ribosomal RNA. Required for optimal pre-ribosomal RNA transcription by RNA polymerase I. The protein is WD repeat-containing protein 75 (Wdr75) of Mus musculus (Mouse).